The primary structure comprises 459 residues: Cysteine--tRNA ligase (459 aa).

Residue Cys28 coordinates Zn(2+). The 'HIGH' region signature appears at Val30–His40. The Zn(2+) site is built by Cys209, His234, and Glu238. A 'KMSKS' region motif is present at residues Lys266–Ser270. Lys269 contacts ATP.

It belongs to the class-I aminoacyl-tRNA synthetase family. In terms of assembly, monomer. Zn(2+) is required as a cofactor.

It localises to the cytoplasm. The enzyme catalyses tRNA(Cys) + L-cysteine + ATP = L-cysteinyl-tRNA(Cys) + AMP + diphosphate. This is Cysteine--tRNA ligase from Actinobacillus pleuropneumoniae serotype 5b (strain L20).